The chain runs to 246 residues: Indole-3-glycerol phosphate synthase (246 aa).

This sequence belongs to the TrpC family.

It catalyses the reaction 1-(2-carboxyphenylamino)-1-deoxy-D-ribulose 5-phosphate + H(+) = (1S,2R)-1-C-(indol-3-yl)glycerol 3-phosphate + CO2 + H2O. The protein operates within amino-acid biosynthesis; L-tryptophan biosynthesis; L-tryptophan from chorismate: step 4/5. The chain is Indole-3-glycerol phosphate synthase from Sulfurisphaera tokodaii (strain DSM 16993 / JCM 10545 / NBRC 100140 / 7) (Sulfolobus tokodaii).